Here is a 297-residue protein sequence, read N- to C-terminus: Phosphoribosylaminoimidazole-succinocarboxamide synthase (297 aa).

This sequence belongs to the SAICAR synthetase family.

It catalyses the reaction 5-amino-1-(5-phospho-D-ribosyl)imidazole-4-carboxylate + L-aspartate + ATP = (2S)-2-[5-amino-1-(5-phospho-beta-D-ribosyl)imidazole-4-carboxamido]succinate + ADP + phosphate + 2 H(+). Its pathway is purine metabolism; IMP biosynthesis via de novo pathway; 5-amino-1-(5-phospho-D-ribosyl)imidazole-4-carboxamide from 5-amino-1-(5-phospho-D-ribosyl)imidazole-4-carboxylate: step 1/2. This Mycobacteroides abscessus (strain ATCC 19977 / DSM 44196 / CCUG 20993 / CIP 104536 / JCM 13569 / NCTC 13031 / TMC 1543 / L948) (Mycobacterium abscessus) protein is Phosphoribosylaminoimidazole-succinocarboxamide synthase.